We begin with the raw amino-acid sequence, 136 residues long: Small integral membrane protein 23 (136 aa).

Residues 1 to 31 (MTIQKTGCRGREAAEVVEQRRRSHHCDDRKQ) lie on the Cytoplasmic side of the membrane. The chain crosses the membrane as a helical; Signal-anchor for type II membrane protein span at residues 32–52 (TLLALLILVLYLGMGISGSSW). Topologically, residues 53–136 (EVSGQTKDCN…DLRPEDPCFT (84 aa)) are extracellular. A coiled-coil region spans residues 92–124 (LKINLHGFLEKLEKEVRELEQLVRDLEFWLDAL).

The protein localises to the membrane. In Mus musculus (Mouse), this protein is Small integral membrane protein 23 (Smim23).